Reading from the N-terminus, the 434-residue chain is Histidine--tRNA ligase (434 aa).

The tract at residues 412–434 (DQTTVPVEAFPGDHDAPTYEDVV) is disordered.

It belongs to the class-II aminoacyl-tRNA synthetase family.

It localises to the cytoplasm. The enzyme catalyses tRNA(His) + L-histidine + ATP = L-histidyl-tRNA(His) + AMP + diphosphate + H(+). The polypeptide is Histidine--tRNA ligase (Haloquadratum walsbyi (strain DSM 16790 / HBSQ001)).